A 569-amino-acid polypeptide reads, in one-letter code: Sulfite reductase [NADPH] hemoprotein beta-component (569 aa).

The [4Fe-4S] cluster site is built by C433, C439, C478, and C482. C482 contributes to the siroheme binding site.

It belongs to the nitrite and sulfite reductase 4Fe-4S domain family. In terms of assembly, alpha(8)-beta(8). The alpha component is a flavoprotein, the beta component is a hemoprotein. Requires siroheme as cofactor. It depends on [4Fe-4S] cluster as a cofactor.

The catalysed reaction is hydrogen sulfide + 3 NADP(+) + 3 H2O = sulfite + 3 NADPH + 4 H(+). It participates in sulfur metabolism; hydrogen sulfide biosynthesis; hydrogen sulfide from sulfite (NADPH route): step 1/1. In terms of biological role, component of the sulfite reductase complex that catalyzes the 6-electron reduction of sulfite to sulfide. This is one of several activities required for the biosynthesis of L-cysteine from sulfate. The chain is Sulfite reductase [NADPH] hemoprotein beta-component from Shewanella sediminis (strain HAW-EB3).